We begin with the raw amino-acid sequence, 126 residues long: Bactofilin BacO (126 aa).

This sequence belongs to the bactofilin family. Interacts with BacN and probably also BacP, the 3 proteins colocalize as an extended structure. Interacts with PadC.

Its subcellular location is the cytoplasm. The protein localises to the cytoskeleton. Functionally, a non-essential component of the chromosome segregation machinery. Positions the ParA-ParB-parS chromosome segregation machinery within the cell; BacP seems to be the most important bactofilin in this process. Forms a heteropolymeric, subpolar scaffold in the cell; BacP probably forms the core, BacO contributes to position and integrity while BacN does not seem to contribute to assembly. The chain is Bactofilin BacO from Myxococcus xanthus (strain DK1622).